Here is a 550-residue protein sequence, read N- to C-terminus: Hydroxylamine reductase (550 aa).

4 residues coordinate [2Fe-2S] cluster: cysteine 3, cysteine 6, cysteine 18, and cysteine 25. Residues histidine 249, glutamate 273, cysteine 317, cysteine 405, cysteine 433, cysteine 458, glutamate 492, and lysine 494 each coordinate hybrid [4Fe-2O-2S] cluster. Cysteine 405 is subject to Cysteine persulfide.

Belongs to the HCP family. Requires [2Fe-2S] cluster as cofactor. Hybrid [4Fe-2O-2S] cluster is required as a cofactor.

It is found in the cytoplasm. It carries out the reaction A + NH4(+) + H2O = hydroxylamine + AH2 + H(+). Its function is as follows. Catalyzes the reduction of hydroxylamine to form NH(3) and H(2)O. The polypeptide is Hydroxylamine reductase (Escherichia coli O139:H28 (strain E24377A / ETEC)).